We begin with the raw amino-acid sequence, 270 residues long: Tubulin-specific chaperone B (270 aa).

Positions 214-256 (GTVEFSSGVWIGVELDLPLGKNDGSVKGKQYFQCSPKYGCFAK) constitute a CAP-Gly domain.

This sequence belongs to the TBCB family. In terms of assembly, supercomplex made of cofactors A to E. Cofactors A and D function by capturing and stabilizing tubulin in a quasi-native conformation. Cofactor E binds to the cofactor D-tubulin complex; interaction with cofactor C then causes the release of tubulin polypeptides that are committed to the native state.

It is found in the cytoplasm. The protein resides in the cytoskeleton. In terms of biological role, binds to alpha-tubulin folding intermediates after their interaction with cytosolic chaperonin in the pathway leading from newly synthesized tubulin to properly folded heterodimer. The protein is Tubulin-specific chaperone B (tbcb) of Dictyostelium discoideum (Social amoeba).